We begin with the raw amino-acid sequence, 319 residues long: Glutathione synthetase (319 aa).

The ATP-grasp domain maps to 127 to 311; sequence KIFVTEFADL…VASLLWDAIE (185 aa). Residue 153–209 coordinates ATP; sequence RNEMGDIILKPLYGNGGAGVFHSARDDRNFSSLLEMFGQMFREPYIAQEYLPDVRKG. The Mg(2+) site is built by Glu-282 and Asn-284.

The protein belongs to the prokaryotic GSH synthase family. Requires Mg(2+) as cofactor. It depends on Mn(2+) as a cofactor.

The catalysed reaction is gamma-L-glutamyl-L-cysteine + glycine + ATP = glutathione + ADP + phosphate + H(+). It participates in sulfur metabolism; glutathione biosynthesis; glutathione from L-cysteine and L-glutamate: step 2/2. The sequence is that of Glutathione synthetase from Agrobacterium fabrum (strain C58 / ATCC 33970) (Agrobacterium tumefaciens (strain C58)).